Consider the following 380-residue polypeptide: Chaperone protein DnaJ (380 aa).

The segment at 1–48 is disordered; sequence MAKKDYYDTLGVPKNASDDDIKKAYRKLAMKHHPDRNQGDKSKVSEEK. The 68-residue stretch at 5–72 folds into the J domain; sequence DYYDTLGVPK…NKRMAYDQYG (68 aa). The span at 24–34 shows a compositional bias: basic residues; it reads AYRKLAMKHHP. Positions 35–48 are enriched in basic and acidic residues; sequence DRNQGDKSKVSEEK. Residues 139 to 217 form a CR-type zinc finger; that stretch reads GKEAQIRIPS…CHGVGKTKNN (79 aa). Residues Cys-152, Cys-155, Cys-169, Cys-172, Cys-191, Cys-194, Cys-205, and Cys-208 each coordinate Zn(2+). CXXCXGXG motif repeat units follow at residues 152–159, 169–176, 191–198, and 205–212; these read CNTCHGSG, CTTCHGHG, CPQCKGTG, and CVACHGVG. The tract at residues 357–380 is disordered; the sequence is KKGGARHSPSEEGWADKLKSFFSA. Positions 364 to 380 are enriched in basic and acidic residues; the sequence is SPSEEGWADKLKSFFSA.

The protein belongs to the DnaJ family. In terms of assembly, homodimer. Requires Zn(2+) as cofactor.

Its subcellular location is the cytoplasm. Its function is as follows. Participates actively in the response to hyperosmotic and heat shock by preventing the aggregation of stress-denatured proteins and by disaggregating proteins, also in an autonomous, DnaK-independent fashion. Unfolded proteins bind initially to DnaJ; upon interaction with the DnaJ-bound protein, DnaK hydrolyzes its bound ATP, resulting in the formation of a stable complex. GrpE releases ADP from DnaK; ATP binding to DnaK triggers the release of the substrate protein, thus completing the reaction cycle. Several rounds of ATP-dependent interactions between DnaJ, DnaK and GrpE are required for fully efficient folding. Also involved, together with DnaK and GrpE, in the DNA replication of plasmids through activation of initiation proteins. The chain is Chaperone protein DnaJ from Polaromonas sp. (strain JS666 / ATCC BAA-500).